The primary structure comprises 237 residues: Cytosolic-abundant heat soluble protein 1 (237 aa).

2 stretches are compositionally biased toward basic and acidic residues: residues 1 to 17 and 91 to 105; these read MPYE…KTEQ and VDMR…EARR. Disordered stretches follow at residues 1–35 and 85–105; these read MPYE…VARE and SGAS…EARR. The stretch at 98-201 forms a coiled coil; sequence KLAEEARRDA…KEALERSRMA (104 aa). 2 CAHS motif regions span residues 132-150 and 169-187; these read YRHQ…LEKQ and QKRE…LDRE. Residues 212 to 237 are disordered; that stretch reads AGHTVSGGTTVSSVDKVETVRERKHH. Basic and acidic residues predominate over residues 226–237; the sequence is DKVETVRERKHH.

This sequence belongs to the Cytosolic-abundant heat soluble protein (CAHS) family.

The protein resides in the cytoplasm. The protein localises to the nucleus. CAHS proteins are cytosolic heat soluble proteins that seem to contribute to the anhydrobiosis in tardigrades, but their specific mechanisms are yet to be identified. It is possible that protection during anhydrobiosis might occur via the stabilization of vitrifying small molecules such as sugars, but not via the direct glass transition of CAHS proteins themselves. The chain is Cytosolic-abundant heat soluble protein 1 from Ramazzottius varieornatus (Water bear).